Here is a 166-residue protein sequence, read N- to C-terminus: Mitochondrial translation release factor in rescue (166 aa).

The N-terminal 35 residues, 1-35, are a transit peptide targeting the mitochondrion; sequence MSTVGLFHFPTPLTRICPAPWGLRLWEKLTLLSPG. Residues 57-121 form a GGQ domain region; the sequence is ENELEEQFVK…LQEKVDVFYN (65 aa). Positions 71 to 73 match the GGQ motif; the sequence is GGQ. Q73 carries the N5-methylglutamine modification. A disordered region spans residues 122–148; the sequence is GENSPVHKEKREAAKKKQERKKRAKET. A compositionally biased stretch (basic and acidic residues) spans 126 to 137; sequence PVHKEKREAAKK. The stretch at 127–160 forms a coiled coil; that stretch reads VHKEKREAAKKKQERKKRAKETLEKKKLLKELWE.

Belongs to the prokaryotic/mitochondrial release factor family. As to quaternary structure, interacts (via C-terminus) with MTRES1 (via S4 domain). Associates with mitoribosomal S39 large subunit, peptidyl tRNA and nascent chain. In terms of processing, methylation of glutamine in the GGQ triplet by HEMK1. Expressed in all areas of the brain tested.

The protein resides in the mitochondrion. Functionally, part of a mitoribosome-associated quality control pathway that prevents aberrant translation by responding to interruptions during elongation. As heterodimer with MTRES1, ejects the unfinished nascent chain and peptidyl transfer RNA (tRNA), respectively, from stalled ribosomes. Recruitment of mitoribosome biogenesis factors to these quality control intermediates suggests additional roles for MTRES1 and MTRF during mitoribosome rescue. The protein is Mitochondrial translation release factor in rescue of Homo sapiens (Human).